A 184-amino-acid chain; its full sequence is MTSITGMIDPFLLLATESHAEGEALIGFHFDFLESNILNLAILVGVLVFYGRKVVGNILSERRNQIAQAIQEAEEKQRTAAQALAKEKENLAQAQKEAARIHEAAIERAKTLRAEIAAQSERDIARLKETAAADLSSEQERVMAQLKKQIAEQAIVKAESQLKAQVDNNTQQRLIDRSIARLGG.

A helical transmembrane segment spans residues 36–55; the sequence is NILNLAILVGVLVFYGRKVV.

The protein belongs to the ATPase B chain family. In terms of assembly, F-type ATPases have 2 components, F(1) - the catalytic core - and F(0) - the membrane proton channel. F(1) has five subunits: alpha(3), beta(3), gamma(1), delta(1), epsilon(1). F(0) has four main subunits: a(1), b(1), b'(1) and c(10-14). The alpha and beta chains form an alternating ring which encloses part of the gamma chain. F(1) is attached to F(0) by a central stalk formed by the gamma and epsilon chains, while a peripheral stalk is formed by the delta, b and b' chains.

It is found in the cellular thylakoid membrane. Functionally, f(1)F(0) ATP synthase produces ATP from ADP in the presence of a proton or sodium gradient. F-type ATPases consist of two structural domains, F(1) containing the extramembraneous catalytic core and F(0) containing the membrane proton channel, linked together by a central stalk and a peripheral stalk. During catalysis, ATP synthesis in the catalytic domain of F(1) is coupled via a rotary mechanism of the central stalk subunits to proton translocation. Its function is as follows. Component of the F(0) channel, it forms part of the peripheral stalk, linking F(1) to F(0). In Crocosphaera subtropica (strain ATCC 51142 / BH68) (Cyanothece sp. (strain ATCC 51142)), this protein is ATP synthase subunit b 1.